A 209-amino-acid polypeptide reads, in one-letter code: DNA transformation protein TfoX1 (209 aa).

It belongs to the Sxy/TfoX family.

In terms of biological role, required for DNA transformation jointly with TfoY (tfoX2). This Aliivibrio fischeri (strain ATCC 700601 / ES114) (Vibrio fischeri) protein is DNA transformation protein TfoX1.